A 1209-amino-acid polypeptide reads, in one-letter code: Sterol 3-beta-glucosyltransferase (1209 aa).

A GRAM 1 domain is found at 167 to 217 (ERLIKKFLPNDDEKYIEEYPCWLLRDIMIQGHAYLTNKHLFFFAFIPNFES). Positions 218–315 (DFNVTGSLRL…WVSSIKKQMF (98 aa)) constitute a PH domain. The region spanning 568–634 (VRFRQHFSFD…EDVENCYKET (67 aa)) is the GRAM 2 domain. Residues S745, R746, D748, N1019, V1048, H1050, H1063, S1066, G1067, T1068, D1087, and Q1088 each contribute to the UDP-alpha-D-glucose site. Residues 1186–1209 (AKGNEKEEYSSEGSGSNDGSWLLI) form a disordered region. A compositionally biased stretch (low complexity) spans 1196-1209 (SEGSGSNDGSWLLI).

Belongs to the glycosyltransferase 28 family.

It is found in the cytoplasm. The protein resides in the membrane. The catalysed reaction is a sterol + UDP-alpha-D-glucose = a sterol 3-beta-D-glucoside + UDP + H(+). It catalyses the reaction ergosterol + UDP-alpha-D-glucose = ergosteryl 3-beta-D-glucoside + UDP + H(+). Sterol glycosyltransferase responsible for the glycosylation of ergosterol to form ergosterol-glucoside. The polypeptide is Sterol 3-beta-glucosyltransferase (Kluyveromyces lactis (strain ATCC 8585 / CBS 2359 / DSM 70799 / NBRC 1267 / NRRL Y-1140 / WM37) (Yeast)).